The sequence spans 199 residues: Adenylyl-sulfate kinase (199 aa).

An ATP-binding site is contributed by 35 to 42 (GLSGSGKS). The active-site Phosphoserine intermediate is the S109.

The protein belongs to the APS kinase family.

It catalyses the reaction adenosine 5'-phosphosulfate + ATP = 3'-phosphoadenylyl sulfate + ADP + H(+). It functions in the pathway sulfur metabolism; hydrogen sulfide biosynthesis; sulfite from sulfate: step 2/3. Functionally, catalyzes the synthesis of activated sulfate. The protein is Adenylyl-sulfate kinase of Clostridium kluyveri (strain ATCC 8527 / DSM 555 / NBRC 12016 / NCIMB 10680 / K1).